The sequence spans 450 residues: 3-phosphoshikimate 1-carboxyvinyltransferase (450 aa).

Residues 1 to 26 form a disordered region; sequence MSAHGDPIPMTAHPSGPLSGTAQVPG. 3 residues coordinate 3-phosphoshikimate: Lys-28, Ser-29, and Arg-33. Lys-28 contacts phosphoenolpyruvate. Positions 101 and 129 each coordinate phosphoenolpyruvate. The 3-phosphoshikimate site is built by Ser-174, Gln-176, Asp-327, and Lys-354. Gln-176 lines the phosphoenolpyruvate pocket. Asp-327 (proton acceptor) is an active-site residue. Residues Arg-358 and Arg-403 each coordinate phosphoenolpyruvate.

This sequence belongs to the EPSP synthase family. Monomer.

The protein resides in the cytoplasm. It carries out the reaction 3-phosphoshikimate + phosphoenolpyruvate = 5-O-(1-carboxyvinyl)-3-phosphoshikimate + phosphate. The protein operates within metabolic intermediate biosynthesis; chorismate biosynthesis; chorismate from D-erythrose 4-phosphate and phosphoenolpyruvate: step 6/7. Its function is as follows. Catalyzes the transfer of the enolpyruvyl moiety of phosphoenolpyruvate (PEP) to the 5-hydroxyl of shikimate-3-phosphate (S3P) to produce enolpyruvyl shikimate-3-phosphate and inorganic phosphate. This is 3-phosphoshikimate 1-carboxyvinyltransferase from Dinoroseobacter shibae (strain DSM 16493 / NCIMB 14021 / DFL 12).